Consider the following 253-residue polypeptide: Tryptophan synthase alpha chain (253 aa).

Active-site proton acceptor residues include E47 and D58.

The protein belongs to the TrpA family. Tetramer of two alpha and two beta chains.

It catalyses the reaction (1S,2R)-1-C-(indol-3-yl)glycerol 3-phosphate + L-serine = D-glyceraldehyde 3-phosphate + L-tryptophan + H2O. The protein operates within amino-acid biosynthesis; L-tryptophan biosynthesis; L-tryptophan from chorismate: step 5/5. Functionally, the alpha subunit is responsible for the aldol cleavage of indoleglycerol phosphate to indole and glyceraldehyde 3-phosphate. The sequence is that of Tryptophan synthase alpha chain from Syntrophotalea carbinolica (strain DSM 2380 / NBRC 103641 / GraBd1) (Pelobacter carbinolicus).